Consider the following 308-residue polypeptide: UPF0282 protein YG5714_2245 (308 aa).

Belongs to the UPF0282 family.

The protein is UPF0282 protein YG5714_2245 of Saccharolobus islandicus (strain Y.G.57.14 / Yellowstone #1) (Sulfolobus islandicus).